The primary structure comprises 377 residues: tRNA-specific 2-thiouridylase MnmA (377 aa).

ATP is bound by residues 12 to 19 and methionine 38; that span reads GMSGGVDS. The interaction with target base in tRNA stretch occupies residues 98 to 100; that stretch reads NPD. Residue cysteine 103 is the Nucleophile of the active site. Residues cysteine 103 and cysteine 200 are joined by a disulfide bond. Glycine 127 is a binding site for ATP. An interaction with tRNA region spans residues 150–152; it reads KDQ. The Cysteine persulfide intermediate role is filled by cysteine 200. The segment at 313 to 314 is interaction with tRNA; the sequence is RY.

The protein belongs to the MnmA/TRMU family.

It localises to the cytoplasm. It catalyses the reaction S-sulfanyl-L-cysteinyl-[protein] + uridine(34) in tRNA + AH2 + ATP = 2-thiouridine(34) in tRNA + L-cysteinyl-[protein] + A + AMP + diphosphate + H(+). Catalyzes the 2-thiolation of uridine at the wobble position (U34) of tRNA, leading to the formation of s(2)U34. The polypeptide is tRNA-specific 2-thiouridylase MnmA (Pediococcus pentosaceus (strain ATCC 25745 / CCUG 21536 / LMG 10740 / 183-1w)).